The sequence spans 203 residues: Superoxide dismutase [Mn] (203 aa).

Mn(2+) contacts are provided by histidine 27, histidine 81, aspartate 164, and histidine 168.

It belongs to the iron/manganese superoxide dismutase family. Homodimer. Mn(2+) serves as cofactor.

The enzyme catalyses 2 superoxide + 2 H(+) = H2O2 + O2. Destroys superoxide anion radicals which are normally produced within the cells and which are toxic to biological systems. Partially complements double sodA-sodB deletions in E.coli. The polypeptide is Superoxide dismutase [Mn] (Pseudomonas aeruginosa (strain ATCC 15692 / DSM 22644 / CIP 104116 / JCM 14847 / LMG 12228 / 1C / PRS 101 / PAO1)).